The following is a 257-amino-acid chain: Ribosomal RNA small subunit methyltransferase J (257 aa).

Residues 107–108 (RD), 123–124 (ER), and D177 each bind S-adenosyl-L-methionine.

Belongs to the methyltransferase superfamily. RsmJ family.

The protein localises to the cytoplasm. It carries out the reaction guanosine(1516) in 16S rRNA + S-adenosyl-L-methionine = N(2)-methylguanosine(1516) in 16S rRNA + S-adenosyl-L-homocysteine + H(+). Its function is as follows. Specifically methylates the guanosine in position 1516 of 16S rRNA. This is Ribosomal RNA small subunit methyltransferase J from Haemophilus influenzae (strain PittEE).